We begin with the raw amino-acid sequence, 395 residues long: Membrane glycoprotein spo14 (395 aa).

The Cytoplasmic segment spans residues 1-346; that stretch reads MAELHLSFPA…KLEDAGVILR (346 aa). WD repeat units follow at residues 250 to 285 and 290 to 326; these read MIRD…RFMS and KLSQ…CLQF. A helical; Signal-anchor for type II membrane protein membrane pass occupies residues 347-367; sequence LSLMFPFVLAILYFYLQLLFP. The Lumenal portion of the chain corresponds to 368–395; that stretch reads DEKLDAIHRFFSFILHIFSKYTIRNYDL.

Its subcellular location is the endoplasmic reticulum membrane. It is found in the golgi apparatus. It localises to the cis-Golgi network membrane. In terms of biological role, required for the formation of transport vesicles from the ER. This function involves the cytoplasmic domain of the protein, which is thought to interact with the small GTP-binding protein sar1. This chain is Membrane glycoprotein spo14 (spo14), found in Schizosaccharomyces pombe (strain 972 / ATCC 24843) (Fission yeast).